The primary structure comprises 757 residues: LPS-assembly protein LptD (757 aa).

An N-terminal signal peptide occupies residues 1-21 (MRRLIPIAITGSLLWGAAVQA).

The protein belongs to the LptD family. In terms of assembly, component of the lipopolysaccharide transport and assembly complex. Interacts with LptE and LptA.

It localises to the cell outer membrane. Its function is as follows. Together with LptE, is involved in the assembly of lipopolysaccharide (LPS) at the surface of the outer membrane. This is LPS-assembly protein LptD from Alkalilimnicola ehrlichii (strain ATCC BAA-1101 / DSM 17681 / MLHE-1).